The following is a 383-amino-acid chain: BRISC and BRCA1-A complex member 2 (383 aa).

An N-acetylmethionine modification is found at M1. S2 carries the post-translational modification Phosphoserine. 2 UEV-like regions span residues 30–147 (DATN…TLLE) and 275–364 (IAAF…RAKA).

This sequence belongs to the BABAM2 family. Component of the ARISC complex, at least composed of UIMC1/RAP80, ABRAXAS1, BRCC3/BRCC36, BABAM2 and BABAM1/NBA1. Component of the BRCA1-A complex, at least composed of BRCA1, BARD1, UIMC1/RAP80, ABRAXAS1, BRCC3/BRCC36, BABAM2 and BABAM1/NBA1. In the BRCA1-A complex, interacts directly with ABRAXAS1, BRCC3/BRCC36 and BABAM1/NBA1. Binds polyubiquitin. Component of the BRISC complex, at least composed of ABRAXAS2, BRCC3/BRCC36, BABAM2 and BABAM1/NBA1. Identified in a complex with SHMT2 and the other subunits of the BRISC complex. Component of the BRCA1/BRCA2 containing complex (BRCC), which also contains BRCA1, BRCA2, BARD1, BRCC3/BRCC36 and RAD51. BRCC is a ubiquitin E3 ligase complex that enhances cellular survival following DNA damage. May interact with FAS and TNFRSF1A. Expressed in all cell lines examined. Highly expressed in placenta.

The protein localises to the cytoplasm. The protein resides in the nucleus. Component of the BRCA1-A complex, a complex that specifically recognizes 'Lys-63'-linked ubiquitinated histones H2A and H2AX at DNA lesions sites, leading to target the BRCA1-BARD1 heterodimer to sites of DNA damage at double-strand breaks (DSBs). The BRCA1-A complex also possesses deubiquitinase activity that specifically removes 'Lys-63'-linked ubiquitin on histones H2A and H2AX. In the BRCA1-A complex, it acts as an adapter that bridges the interaction between BABAM1/NBA1 and the rest of the complex, thereby being required for the complex integrity and modulating the E3 ubiquitin ligase activity of the BRCA1-BARD1 heterodimer. Component of the BRISC complex, a multiprotein complex that specifically cleaves 'Lys-63'-linked ubiquitin in various substrates. Within the BRISC complex, acts as an adapter that bridges the interaction between BABAM1/NBA1 and the rest of the complex, thereby being required for the complex integrity. The BRISC complex is required for normal mitotic spindle assembly and microtubule attachment to kinetochores via its role in deubiquitinating NUMA1. The BRISC complex plays a role in interferon signaling via its role in the deubiquitination of the interferon receptor IFNAR1; deubiquitination increases IFNAR1 activity by enhancing its stability and cell surface expression. Down-regulates the response to bacterial lipopolysaccharide (LPS) via its role in IFNAR1 deubiquitination. May play a role in homeostasis or cellular differentiation in cells of neural, epithelial and germline origins. May also act as a death receptor-associated anti-apoptotic protein, which inhibits the mitochondrial apoptotic pathway. May regulate TNF-alpha signaling through its interactions with TNFRSF1A; however these effects may be indirect. The protein is BRISC and BRCA1-A complex member 2 of Homo sapiens (Human).